We begin with the raw amino-acid sequence, 54 residues long: UPF0391 membrane protein Mfla_0947/Mfla_1091 (54 aa).

2 helical membrane-spanning segments follow: residues 6 to 26 and 30 to 50; these read VIFFVIALIAAFFGFSGIAAG and IAKILFFVFLIITIVSLVAGI.

This sequence belongs to the UPF0391 family.

It localises to the cell membrane. The polypeptide is UPF0391 membrane protein Mfla_0947/Mfla_1091 (Methylobacillus flagellatus (strain ATCC 51484 / DSM 6875 / VKM B-1610 / KT)).